We begin with the raw amino-acid sequence, 423 residues long: Protein CLP1 homolog (423 aa).

Residues glutamate 19, lysine 60, and 122–127 contribute to the ATP site; that span reads DVGKTT.

The protein belongs to the Clp1 family. Clp1 subfamily.

The protein resides in the nucleus. Required for endonucleolytic cleavage during polyadenylation-dependent pre-mRNA 3'-end formation. The sequence is that of Protein CLP1 homolog (cbc) from Culex quinquefasciatus (Southern house mosquito).